Here is a 1057-residue protein sequence, read N- to C-terminus: Diacylglycerol kinase iota (1057 aa).

The segment covering 15–59 has biased composition (low complexity); the sequence is AARGPARAPAAAAAAAASPPGPCSGAACAPSAAAGAGAMNPSSSA. 2 disordered regions span residues 15–74 and 334–358; these read AARG…SSGS and LKAS…MEQE. Positions 337–352 are enriched in basic residues; it reads SNRKKKRTSFKRKASK. The DAGKc domain occupies 372–507; sequence PLMKPLLVFV…DRWNLHVERN (136 aa). 2 ANK repeats span residues 950 to 979 and 986 to 1015; these read DHCS…SELL and TGET…SLRK. A compositionally biased stretch (basic and acidic residues) spans 1014–1024; that stretch reads RKTDSKGKTPQ. The interval 1014–1033 is disordered; it reads RKTDSKGKTPQERAQQAGDP. The PDZ-binding signature appears at 1055–1057; it reads TAV.

It belongs to the eukaryotic diacylglycerol kinase family. Interacts (via PDZ-binding motif) with DLG4; controls the localization of DGKI to the synapse. Interacts (via PDZ-binding motif) with DLG1. Interacts (via PDZ-binding motif) with DLG2. Interacts (via PDZ-binding motif) with DLG3. May interact with RASGRP3; involved in the regulation of RASGRP3 activity. Specifically expressed in brain and retina. In brain, highly expressed in hippocampus, caudate nucleus, occipital pole, cerebral cortex, and cerebellum. Also detected in kidney.

The protein resides in the cell projection. The protein localises to the axon. It is found in the dendrite. Its subcellular location is the presynapse. It localises to the postsynapse. The protein resides in the postsynaptic density. The protein localises to the synaptic cell membrane. It is found in the cytoplasmic vesicle. Its subcellular location is the secretory vesicle. It localises to the synaptic vesicle membrane. The protein resides in the cytoplasm. The protein localises to the cytosol. It is found in the nucleus. The enzyme catalyses a 1,2-diacyl-sn-glycerol + ATP = a 1,2-diacyl-sn-glycero-3-phosphate + ADP + H(+). The catalysed reaction is 1,2-di-(9Z-octadecenoyl)-sn-glycerol + ATP = 1,2-di-(9Z-octadecenoyl)-sn-glycero-3-phosphate + ADP + H(+). It catalyses the reaction 1-octadecanoyl-2-(5Z,8Z,11Z,14Z-eicosatetraenoyl)-sn-glycerol + ATP = 1-octadecanoyl-2-(5Z,8Z,11Z,14Z-eicosatetraenoyl)-sn-glycero-3-phosphate + ADP + H(+). It carries out the reaction 1-octadecanoyl-2-(9Z,12Z)-octadecadienoyl-sn-glycerol + ATP = 1-octadecanoyl-2-(9Z,12Z-octadecadienoyl)-sn-glycero-3-phosphate + ADP + H(+). It functions in the pathway lipid metabolism; glycerolipid metabolism. Functionally, diacylglycerol kinase that converts diacylglycerol/DAG into phosphatidic acid/phosphatidate/PA and regulates the respective levels of these two bioactive lipids. Thereby, acts as a central switch between the signaling pathways activated by these second messengers with different cellular targets and opposite effects in numerous biological processes. Has probably no preference for any of the diacylglycerols in terms of the acyl chain composition, especially for the acyl chain at the sn-2 position. By controlling the diacylglycerol/DAG-mediated activation of RASGRP3, negatively regulates the Rap1 signaling pathway. May play a role in presynaptic diacylglycerol/DAG signaling and control neurotransmitter release during metabotropic glutamate receptor-dependent long-term depression. This chain is Diacylglycerol kinase iota, found in Homo sapiens (Human).